The primary structure comprises 533 residues: Calcium-dependent protein kinase 19 (533 aa).

2 stretches are compositionally biased toward polar residues: residues 1–12 (MGSCCSRATSPD) and 24–38 (SHQT…SYNH). Residues 1–53 (MGSCCSRATSPDSGRGGANGYGYSHQTKPAQTTPSYNHPQPPPPAEVRYTPSA) are disordered. Gly-2 carries the N-myristoyl glycine lipid modification. The 259-residue stretch at 85–343 (YSLGKELGRG…SAQVLQHPWL (259 aa)) folds into the Protein kinase domain. Residues 91–99 (LGRGQFGVT) and Lys-114 each bind ATP. Asp-209 functions as the Proton acceptor in the catalytic mechanism. The autoinhibitory domain stretch occupies residues 348–378 (ASDKPIDSAVLSRMKQFRAMNKLKKMALKVI). 4 EF-hand domains span residues 385 to 420 (EEIK…LGSK), 421 to 456 (LSEA…RHKL), 457 to 492 (ERDE…HEMG), and 497 to 527 (IKDI…GGMQ). Ca(2+) is bound by residues Asp-398, Asp-400, Ser-402, Thr-404, Glu-409, Asp-434, Asp-436, Asn-438, Ser-440, Glu-445, Asp-470, Asp-472, Ser-474, Glu-481, Asp-505, Asp-507, Asp-509, Arg-511, and Glu-516.

Belongs to the protein kinase superfamily. Ser/Thr protein kinase family. CDPK subfamily. In terms of tissue distribution, expressed in root tips, leaf veins, mesophyll cells, flower reproductive organs and mature pollen grains.

It is found in the membrane. The catalysed reaction is L-seryl-[protein] + ATP = O-phospho-L-seryl-[protein] + ADP + H(+). It catalyses the reaction L-threonyl-[protein] + ATP = O-phospho-L-threonyl-[protein] + ADP + H(+). Its activity is regulated as follows. Activated by calcium. Autophosphorylation may play an important role in the regulation of the kinase activity. Functionally, may play a role in signal transduction pathways that involve calcium as a second messenger. This Oryza sativa subsp. japonica (Rice) protein is Calcium-dependent protein kinase 19.